The sequence spans 184 residues: Ribosome-recycling factor (184 aa).

It belongs to the RRF family.

The protein localises to the cytoplasm. Functionally, responsible for the release of ribosomes from messenger RNA at the termination of protein biosynthesis. May increase the efficiency of translation by recycling ribosomes from one round of translation to another. This chain is Ribosome-recycling factor, found in Acinetobacter baumannii (strain AB307-0294).